We begin with the raw amino-acid sequence, 545 residues long: Metal transporter NRAT1 (545 aa).

The next 12 membrane-spanning stretches (helical) occupy residues 51–71, 84–104, 128–148, 155–175, 188–208, 234–254, 278–298, 333–353, 373–395, 398–418, 437–457, and 474–494; these read FLAHVGPGALVAIGFLDPSNL, ELLWVILVGMVFALLIQTLAA, IFLWIIAELAVISDDIPEVLG, ILLKIPVWAGVILTVFSTLLL, FIIAAFMFTMAACFFGELSYL, IALFGAIITPYNLFLHSALVL, LAFIVAFLINVSVVVVAGSIC, VVYAVALLASGQSTTISCTFA, LITRVIAIAPSLIVSIVSGPSGA, LIILSSMILSFELPFALIPLL, VVIAWILSFALIVVNTYFLVW, and GLISVVVFALMAAYLVAVVYL. The tract at residues 516-545 is disordered; it reads EAGGTPVVDASAADEDQPAPYRKDLADASM. The segment covering 536 to 545 has biased composition (basic and acidic residues); it reads YRKDLADASM.

The protein belongs to the NRAMP (TC 2.A.55) family. As to expression, expressed at low levels in roots.

The protein localises to the cell membrane. Metal transporter that transports the trivalent cation aluminum (Al(3+)), but does not seem to transport divalent cations such as iron (Fe(2+)), manganese (Mg(2+)) or Cadmium (Cd(2+)). Involved in Al tolerance by taking up Al in root cells, where it is detoxified by chelation with organic acid anions and sequestration into the vacuoles. The polypeptide is Metal transporter NRAT1 (NRAT1) (Oryza sativa subsp. japonica (Rice)).